A 212-amino-acid chain; its full sequence is Probable nicotinate-nucleotide adenylyltransferase (212 aa).

Belongs to the NadD family.

It catalyses the reaction nicotinate beta-D-ribonucleotide + ATP + H(+) = deamido-NAD(+) + diphosphate. The protein operates within cofactor biosynthesis; NAD(+) biosynthesis; deamido-NAD(+) from nicotinate D-ribonucleotide: step 1/1. In terms of biological role, catalyzes the reversible adenylation of nicotinate mononucleotide (NaMN) to nicotinic acid adenine dinucleotide (NaAD). This Saccharopolyspora erythraea (strain ATCC 11635 / DSM 40517 / JCM 4748 / NBRC 13426 / NCIMB 8594 / NRRL 2338) protein is Probable nicotinate-nucleotide adenylyltransferase.